The primary structure comprises 1374 residues: MKVSDRRKFEKANFDEFESALNNKNDLVHCPSITLFESIPTEVRSFYEDEKSGLIKVVKFRTGAMDRKRSFEKIVVSVMVGKNVQKFLTFVEDEPDFQGGPIPSKYLIPKKINLMVYTLFQVHTLKFNRKDYDTLSLFYLNRGYYNELSFRVLERCHEIASARPNDSSTMRTFTDFVSGAPIVRSLQKSTIRRYGYNLAPHMFLLLHVDELSIFSAYQASLPGEKKVDTERLKRDLCPRKPIEIKYFSQICNDMMNKKDRLGDVLATAQRIRRRYNKNSSSEPRLKTLDGLTSERWIQWLGLESDYHCSFSSTRNAEDVVAGEAASSDHHQKISRVTRKRPREPKSTNDILVAGQKLFGSSFEFRDLHQLRLCHEIYMADTPSVAVQAPPGYGKTELFHLPLIALASKGDVKYVSFLFVPYTVLLANCMIRLSRCGCLNVAPVRNFIEEGCDGVTDLYVGIYDDLASTNFTDRIAAWENIVECTFRTNNVKLGYLIVDEFHNFETEVYRQSQFGGITNLDFDAFEKAIFLSGTAPEAVADAALQRIGLTGLAKKSMDINELKRSEDLSRGLSSYPTRMFNLIKEKSEVPLGHVHKIWKKVESQPEEALKLLLALFEIEPESKAIVVASTTNEVEELACSWRKYFRVVWIHGKLGAAEKVSRTKEFVTDGSMRVLIGTKLVTEGIDIKQLMMVIMLDNRLNIIELIQGVGRLRDGGLCYLLSRKNSWAARNRKGELPPIKEGCITEQVREFYGLESKKGKKGQHVGCCGSRTDLSADTVELIERMDRLAEKQATASMSIVALPSSFQESNSSDRCRKYCSSDEDSDTCIHGSANASTNATTNSSTNATTTASTNVRTSATTTASINVRTSATTTESTNSSTNATTTASTNVRTSATTTASINVRTSATTTESTNSNTSATTTESTDSNTSATTTESTDSNTSATTTASTNSSTNATTTASTNSSTNATTTESTNASAKEDANKDGNAEDNRFHPVTDINKESYKRKGSQMVLLERKKLKAQFPNTSENMNVLQFLGFRSDEIKHLFLYGIDIYFCPEGVFTQYGLCKGCQKMFELCVCWAGQKVSYRRMAWEALAVERMLRNDEEYKEYLEDIEPYHGDPVGYLKFFSVKRGEIYSQIQRNYAWYLAITRRRETISVLDSTRGKQGSQVFRMSGRQIKELYYKVWSNLRESKTEVLQYFLNWDEKKCREEWEAKDDTVFVEALEKVGVFQRLRSMTSAGLQGPQYVKLQFSRHHRQLRSRYELSLGMHLRDQLALGVTPSKVPHWTAFLSMLIGLFYNKTFRQKLEYLLEQISEVWLLPHWVDLANVEVLAADNTRVPLYMLMVAVHKELDSDDVPDGRFDIILLCRDSSREVGE.

One can recognise a Helicase ATP-binding domain in the interval 375-552 (EIYMADTPSV…LQRIGLTGLA (178 aa)). 388–395 (APPGYGKT) is an ATP binding site. Positions 609–758 (KLLLALFEIE…EFYGLESKKG (150 aa)) constitute a Helicase C-terminal domain. Residues 832–975 (ANASTNATTN…ATTTESTNAS (144 aa)) are compositionally biased toward low complexity. A disordered region spans residues 832-999 (ANASTNATTN…RFHPVTDINK (168 aa)). Basic and acidic residues predominate over residues 976–999 (AKEDANKDGNAEDNRFHPVTDINK).

It belongs to the helicase family. Yeast subtelomeric Y' repeat subfamily.

Its function is as follows. Catalyzes DNA unwinding and is involved in telomerase-independent telomere maintenance. The chain is Y' element ATP-dependent helicase YML133C from Saccharomyces cerevisiae (strain ATCC 204508 / S288c) (Baker's yeast).